The following is a 453-amino-acid chain: T-box transcription factor T homolog (453 aa).

Positions 47 to 217 (LWRRFSKLTN…YNPFAKAFLD (171 aa)) form a DNA-binding region, T-box. The disordered stretch occupies residues 283-304 (RSHRSTPYPPPPYEQKYSPTSA).

It localises to the nucleus. May be involved in the transcriptional regulation of genes required for gastrulation. In Patiria pectinifera (Starfish), this protein is T-box transcription factor T homolog.